The chain runs to 265 residues: Auxin-responsive protein IAA22 (265 aa).

Disordered stretches follow at residues 54–88 and 172–199; these read LSTP…ERRP and DGRE…SPAM. Over residues 65–88 the composition is skewed to basic and acidic residues; sequence LMNKMKPCSDEGHGSRDAAQERRP. Residues 91 to 194 form the PB1 domain; it reads TMFVKVNLEG…GVDQVSERPD (104 aa).

It belongs to the Aux/IAA family. As to quaternary structure, homodimers and heterodimers. In terms of tissue distribution, highly expressed in flowers. Expressed in roots and seedlings.

The protein resides in the nucleus. In terms of biological role, aux/IAA proteins are short-lived transcriptional factors that function as repressors of early auxin response genes at low auxin concentrations. This chain is Auxin-responsive protein IAA22 (IAA22), found in Oryza sativa subsp. japonica (Rice).